A 256-amino-acid chain; its full sequence is Enolase-phosphatase E1 (256 aa).

Residues D14 and E16 each coordinate Mg(2+). Residues 142–143 and K176 contribute to the substrate site; that span reads SS. D201 contributes to the Mg(2+) binding site.

The protein belongs to the HAD-like hydrolase superfamily. MasA/MtnC family. Monomer. The cofactor is Mg(2+).

It is found in the cytoplasm. The protein resides in the nucleus. The enzyme catalyses 5-methylsulfanyl-2,3-dioxopentyl phosphate + H2O = 1,2-dihydroxy-5-(methylsulfanyl)pent-1-en-3-one + phosphate. It functions in the pathway amino-acid biosynthesis; L-methionine biosynthesis via salvage pathway; L-methionine from S-methyl-5-thio-alpha-D-ribose 1-phosphate: step 3/6. It participates in amino-acid biosynthesis; L-methionine biosynthesis via salvage pathway; L-methionine from S-methyl-5-thio-alpha-D-ribose 1-phosphate: step 4/6. Functionally, bifunctional enzyme that catalyzes the enolization of 2,3-diketo-5-methylthiopentyl-1-phosphate (DK-MTP-1-P) into the intermediate 2-hydroxy-3-keto-5-methylthiopentenyl-1-phosphate (HK-MTPenyl-1-P), which is then dephosphorylated to form the acireductone 1,2-dihydroxy-3-keto-5-methylthiopentene (DHK-MTPene). The polypeptide is Enolase-phosphatase E1 (Drosophila melanogaster (Fruit fly)).